We begin with the raw amino-acid sequence, 631 residues long: Probable sulfate transporter 3.3 (631 aa).

Residues 1-69 (MEVHKVVAPP…EYSFSLLKSD (69 aa)) lie on the Cytoplasmic side of the membrane. Residues 70–90 (VVSGLTIASLAIPQGISYAKL) traverse the membrane as a helical segment. The Extracellular segment spans residues 91–92 (AN). A helical transmembrane segment spans residues 93–113 (LPPIVGLYSSFVPPLVYAVLG). Over 114–117 (SSRD) the chain is Cytoplasmic. A helical membrane pass occupies residues 118–138 (LAVGPVSIASLILGSMLRQQV). Residues 139 to 144 (SPVDDP) are Extracellular-facing. A helical transmembrane segment spans residues 145–165 (VLFLQLAFSSTFFAGLFQASL). Topologically, residues 166–171 (GILRLG) are cytoplasmic. Residues 172-192 (FIIDFLSKATLIGFMGGAAII) traverse the membrane as a helical segment. Over 193–223 (VSLQQLKGLLGITHFTKHMSVVPVLSSVFQH) the chain is Extracellular. Residues 224-244 (TNEWSWQTIVMGVCFLLFLLS) traverse the membrane as a helical segment. Residues 245–256 (TRHLSMKKPKLF) lie on the Cytoplasmic side of the membrane. Residues 257–277 (WVSAGAPLLSVIVSTLLVFVF) traverse the membrane as a helical segment. Residues 278 to 309 (RAERHGISVIGKLPEGLNPPSWNMLQFHGSHL) are Extracellular-facing. Residues 310-330 (ALVAKTGLVTGIVSLTEGIAV) traverse the membrane as a helical segment. The Cytoplasmic segment spans residues 331–347 (GRTFAALKNYHVDGNKE). The chain crosses the membrane as a helical span at residues 348 to 368 (MIAIGLMNVVGSATSCYVTTG). At 369 to 384 (AFSRSAVNNNAGAKTA) the chain is on the extracellular side. A helical transmembrane segment spans residues 385–405 (VSNIVMSVTVMVTLLFLMPLF). At 406-410 (EYTPN) the chain is on the cytoplasmic side. The chain crosses the membrane as a helical span at residues 411–431 (VVLGAIIVTAVIGLIDLPAAC). The Extracellular segment spans residues 432-441 (HIWKIDKFDF). The chain crosses the membrane as a helical span at residues 442-462 (LVMLCAFFGVIFLSVQNGLAI). The Cytoplasmic segment spans residues 463-631 (AVGLSLFKIL…SLKGPSLSNV (169 aa)). An STAS domain is found at 497 to 621 (HYKEAQRIPG…LTVAEAVASL (125 aa)).

The protein belongs to the SLC26A/SulP transporter (TC 2.A.53) family. In terms of tissue distribution, expressed only in leaves.

Its subcellular location is the membrane. Functionally, h(+)/sulfate cotransporter that may play a role in the regulation of sulfate assimilation. The sequence is that of Probable sulfate transporter 3.3 (SULTR3;3) from Arabidopsis thaliana (Mouse-ear cress).